A 146-amino-acid chain; its full sequence is Large ribosomal subunit protein uL23B (146 aa).

The segment at 1–22 (MAPSSNKVGKAIQAKKAVVKGS) is disordered.

It belongs to the universal ribosomal protein uL23 family.

In terms of biological role, this protein binds to a specific region on the 26S rRNA. The protein is Large ribosomal subunit protein uL23B (rpl-23A.2) of Caenorhabditis elegans.